Reading from the N-terminus, the 309-residue chain is Ribosomal RNA small subunit methyltransferase H (309 aa).

Residues 39–41, D59, F83, D100, and Q107 contribute to the S-adenosyl-L-methionine site; that span reads GGH.

Belongs to the methyltransferase superfamily. RsmH family.

The protein localises to the cytoplasm. It catalyses the reaction cytidine(1402) in 16S rRNA + S-adenosyl-L-methionine = N(4)-methylcytidine(1402) in 16S rRNA + S-adenosyl-L-homocysteine + H(+). In terms of biological role, specifically methylates the N4 position of cytidine in position 1402 (C1402) of 16S rRNA. The polypeptide is Ribosomal RNA small subunit methyltransferase H (Delftia acidovorans (strain DSM 14801 / SPH-1)).